A 357-amino-acid polypeptide reads, in one-letter code: ATP-dependent 6-phosphofructokinase 2 (357 aa).

ATP contacts are provided by residues Gly-12, 80-81 (KG), and 107-110 (GDGS). Asp-108 contacts Mg(2+). Substrate contacts are provided by residues 131-133 (TID), Arg-168, 175-177 (MGR), Glu-229, Arg-272, and 278-281 (HIQR). Asp-133 serves as the catalytic Proton acceptor.

It belongs to the phosphofructokinase type A (PFKA) family. Mixed-substrate PFK group III subfamily. As to quaternary structure, homodimer or homotetramer. Requires Mg(2+) as cofactor.

It localises to the cytoplasm. The catalysed reaction is beta-D-fructose 6-phosphate + ATP = beta-D-fructose 1,6-bisphosphate + ADP + H(+). It participates in carbohydrate degradation; glycolysis; D-glyceraldehyde 3-phosphate and glycerone phosphate from D-glucose: step 3/4. Subject to allosteric activation by ADP and other diphosphonucleosides, and inhibition by phosphoenolpyruvate. Functionally, catalyzes the phosphorylation of D-fructose 6-phosphate to fructose 1,6-bisphosphate by ATP, the first committing step of glycolysis. This Nostoc sp. (strain PCC 7120 / SAG 25.82 / UTEX 2576) protein is ATP-dependent 6-phosphofructokinase 2.